The following is a 298-amino-acid chain: Urease accessory protein UreD (298 aa).

This sequence belongs to the UreD family. In terms of assembly, ureD, UreF and UreG form a complex that acts as a GTP-hydrolysis-dependent molecular chaperone, activating the urease apoprotein by helping to assemble the nickel containing metallocenter of UreC. The UreE protein probably delivers the nickel.

It localises to the cytoplasm. Functionally, required for maturation of urease via the functional incorporation of the urease nickel metallocenter. The protein is Urease accessory protein UreD of Frankia alni (strain DSM 45986 / CECT 9034 / ACN14a).